We begin with the raw amino-acid sequence, 365 residues long: MQNNEILKPAKYFSELEKSVLLALVEKYKYVLECKKSDARTIALKQRTWQALAHEYNSQPSVSLRDFKQLKKCWENIKARTKKIMAHERREKGKLFGPESNSHQALKEKVASMIPEQLYFVQNQPDDERGYNHDTSNQEMDCKRVSLLDLEVLIDEQGKIQTKPFRKVPETNSLCDDGSPPQSIDKAFPNGDLELLIDEQGKIQAEPIRKVPVTDSQCAQGSPSSSIKTESFVVPERDVYEDQNSIVNMHSSESSLHSTPLFPSSKISANRTYGRKPSQNGIFTKMHEEQHHQQMSILQLQLIQMNEVHVAKVQQIERECEMAEEEHRIKMEILNKKKMYWERKLQTITKEWPVASFNRPFPNSP.

Residues 13–78 enclose the Myb-like domain; that stretch reads FSELEKSVLL…QLKKCWENIK (66 aa). Residues 301 to 337 are a coiled coil; it reads QLIQMNEVHVAKVQQIERECEMAEEEHRIKMEILNKK.

This sequence belongs to the MSANTD3 family.

This chain is Myb/SANT-like DNA-binding domain-containing protein 3 (msantd3), found in Xenopus tropicalis (Western clawed frog).